A 439-amino-acid polypeptide reads, in one-letter code: Microfibrillar-associated protein 1 (439 aa).

Positions 1–17 are enriched in polar residues; sequence MSVPSSLMKQPPIQSTA. Residues 1-200 are disordered; it reads MSVPSSLMKQ…SEDEMEPRLK (200 aa). S2 carries the N-acetylserine modification. Residues 23–34 show a composition bias toward basic and acidic residues; sequence RNEKGEISMEKV. S52 and S53 each carry phosphoserine. The span at 61–70 shows a compositional bias: basic and acidic residues; sequence QFIKKAKEQE. Residue K67 forms a Glycyl lysine isopeptide (Lys-Gly) (interchain with G-Cter in SUMO2) linkage. A compositionally biased stretch (acidic residues) spans 71–81; sequence AEPEEQEEDSS. S94, S116, S118, S132, and S133 each carry phosphoserine. Acidic residues-rich tracts occupy residues 112-122 and 131-144; these read VVGESDSEVEG and DSSEEEEEEIDEEE. The segment covering 145–163 has biased composition (basic and acidic residues); the sequence is IERRRGMMRQRAQERKNEE. A compositionally biased stretch (acidic residues) spans 178–195; the sequence is ESESESEYEEYTDSEDEM. K249 is covalently cross-linked (Glycyl lysine isopeptide (Lys-Gly) (interchain with G-Cter in SUMO2)). At T267 the chain carries Phosphothreonine. K357 is covalently cross-linked (Glycyl lysine isopeptide (Lys-Gly) (interchain with G-Cter in SUMO2)). S361 carries the post-translational modification Phosphoserine. Residues K371, K381, K415, and K418 each participate in a glycyl lysine isopeptide (Lys-Gly) (interchain with G-Cter in SUMO2) cross-link. Phosphoserine is present on S432.

It belongs to the MFAP1 family. In terms of assembly, component of the spliceosome B complex. Interacts with PRPF38A (via N-terminal interaction domain).

The protein resides in the nucleus. Involved in pre-mRNA splicing as a component of the spliceosome. This chain is Microfibrillar-associated protein 1, found in Bos taurus (Bovine).